The sequence spans 199 residues: Thymidine kinase (199 aa).

ATP contacts are provided by residues 23 to 30 (GSMFSGKT) and 95 to 98 (DEAQ). Glu96 serves as the catalytic Proton acceptor. Positions 152, 155, 184, and 187 each coordinate Zn(2+).

This sequence belongs to the thymidine kinase family. As to quaternary structure, homotetramer.

The protein localises to the cytoplasm. It catalyses the reaction thymidine + ATP = dTMP + ADP + H(+). This chain is Thymidine kinase, found in Bacteroides fragilis (strain ATCC 25285 / DSM 2151 / CCUG 4856 / JCM 11019 / LMG 10263 / NCTC 9343 / Onslow / VPI 2553 / EN-2).